An 836-amino-acid chain; its full sequence is General negative regulator of transcription subunit 3 (836 aa).

3 coiled-coil regions span residues Asn36 to Ser68, Arg119 to Glu195, and Asn255 to Ala292. Over residues Glu252 to Ser267 the composition is skewed to polar residues. Disordered regions lie at residues Glu252–Ala284, Ala296–Ala391, Ala410–Ala471, and Asn513–Thr532. Positions Lys268–Lys283 are enriched in basic and acidic residues. Residues Ser303, Ser307, and Ser322 each carry the phosphoserine modification. A compositionally biased stretch (polar residues) spans Ser341–Thr386. A compositionally biased stretch (low complexity) spans Thr418–Ser446. A phosphoserine mark is found at Ser446 and Ser450. Polar residues-rich tracts occupy residues Arg447–Asn468 and Thr522–Asn531. Lys535 is covalently cross-linked (Glycyl lysine isopeptide (Lys-Gly) (interchain with G-Cter in ubiquitin)). The tract at residues Met537–Lys583 is disordered. Acidic residues predominate over residues Phe559 to Gln578. 2 positions are modified to phosphoserine: Ser565 and Ser569. A Phosphothreonine modification is found at Thr571. A Phosphoserine modification is found at Ser657. Positions Asn803–Gln831 form a coiled coil.

It belongs to the CNOT2/3/5 family. As to quaternary structure, forms a NOT protein complex that comprises NOT1, NOT2, NOT3, NOT4 and NOT5. Subunit of the 1.0 MDa CCR4-NOT core complex that contains CCR4, CAF1, NOT1, NOT2, NOT3, NOT4, NOT5, CAF40 and CAF130. The core complex probably is part of a less characterized 1.9 MDa CCR4-NOT complex.

It is found in the cytoplasm. It localises to the nucleus. Its function is as follows. Acts as a component of the CCR4-NOT core complex, which in the nucleus seems to be a general transcription factor, and in the cytoplasm the major mRNA deadenylase involved in mRNA turnover. The NOT protein subcomplex negatively regulates the basal and activated transcription of many genes. Preferentially affects TC-type TATA element-dependent transcription. Could directly or indirectly inhibit component(s) of the general transcription machinery. This is General negative regulator of transcription subunit 3 (NOT3) from Saccharomyces cerevisiae (strain ATCC 204508 / S288c) (Baker's yeast).